Here is a 173-residue protein sequence, read N- to C-terminus: Large ribosomal subunit protein uL10 (173 aa).

This sequence belongs to the universal ribosomal protein uL10 family. As to quaternary structure, part of the ribosomal stalk of the 50S ribosomal subunit. The N-terminus interacts with L11 and the large rRNA to form the base of the stalk. The C-terminus forms an elongated spine to which L12 dimers bind in a sequential fashion forming a multimeric L10(L12)X complex.

Functionally, forms part of the ribosomal stalk, playing a central role in the interaction of the ribosome with GTP-bound translation factors. The sequence is that of Large ribosomal subunit protein uL10 from Maridesulfovibrio salexigens (strain ATCC 14822 / DSM 2638 / NCIMB 8403 / VKM B-1763) (Desulfovibrio salexigens).